Here is an 879-residue protein sequence, read N- to C-terminus: Phosphoenolpyruvate carboxylase (879 aa).

Catalysis depends on residues His138 and Lys545.

The protein belongs to the PEPCase type 1 family. Requires Mg(2+) as cofactor.

The catalysed reaction is oxaloacetate + phosphate = phosphoenolpyruvate + hydrogencarbonate. Forms oxaloacetate, a four-carbon dicarboxylic acid source for the tricarboxylic acid cycle. This Actinobacillus pleuropneumoniae serotype 5b (strain L20) protein is Phosphoenolpyruvate carboxylase.